An 841-amino-acid chain; its full sequence is Nuclear RNA export factor 2 (841 aa).

The tract at residues 1 to 285 (MPNQMRVLDF…NFELVDGKPF (285 aa)) is RNA-binding unit probably involved in Piwi-dependent recruitment and single-stranded RNA-PPNP complex formation. LRR repeat units follow at residues 200 to 221 (RLNG…TLLA), 224 to 245 (DYAL…CRAL), and 249 to 270 (RARE…PANI). The interval 286–553 (NMLHKIFSPL…EYVRAVKEVF (268 aa)) is necessary for silencing function. Residues 325–408 (WHAFMIPDPS…IFRYYLRMNV (84 aa)) enclose the RRM domain. 3 LRR repeats span residues 475–496 (TCSE…HVLG), 500–521 (CLRA…HSLG), and 524–545 (PLKS…PSEY). One can recognise an NTF2 domain in the interval 585–758 (LVGAFLENYL…LKIANERLHI (174 aa)). Residues 788 to 841 (DVKDHKLLLFQEVTGLISTWVTSIVEEADWDFERALKLFIQKNADHEIPDLAFA) enclose the TAP-C domain.

It belongs to the NXF family. As to quaternary structure, in the ovaries, part of a complex composed of at least Panx, nxf2, piwi and Nxt1. The complex is knowns as Panx-induced cotranscriptional silencing (PICTS) complex, Panx-nxf2-dependent TAP/p15 silencing (Pandas complex), SFiNX (silencing factor interacting nuclear export variant) or piwi-Panx-nxf2-p15 (PPNP) complex. Interacts (via TAP-C domain) with Panx (via NIR region); the interaction is direct. Interacts (via NTF2 domain) with Nxt1; the interaction is direct and prevents Nxt1 binding to nucleoporins. Interacts with sbr/Nxf1. In terms of tissue distribution, expressed in female gonads (at protein level). Expressed ubiquitously.

The protein localises to the cytoplasm. It localises to the nucleus. It is found in the nucleoplasm. In terms of biological role, may be involved in the export of mRNA from the nucleus to the cytoplasm. In the ovaries, forms a complex with nxf2, piwi and Nxt1 which acts as effectors of cotranscriptional transposon silencing. On recruitment to a target transcript, interacts with single stranded RNA, thereby anchoring the complex via the nascent target transcript to chromatin and allowing Panx to recruit silencing effectors to establishing repressive heterochromatin at transposon loci. Does not affect piRNA biogenesis. The interaction with Panx stabilizes the nuclear protein complex. Does not bind nucleoporins, but regulates sbr/Nxf1 binding to nucleoporins and, indirectly, transposon exports. This chain is Nuclear RNA export factor 2 (nxf2), found in Drosophila melanogaster (Fruit fly).